The following is a 428-amino-acid chain: GTPase Obg (428 aa).

An Obg domain is found at 1 to 158; that stretch reads MFVDQVKVYV…RYIVLELKVL (158 aa). The tract at residues 117-143 is disordered; sequence ARGGRGGRGNSRFATPANPAPQLSENG. The 171-residue stretch at 159 to 329 folds into the OBG-type G domain; the sequence is ADVGLVGFPS…LLFEVANQLE (171 aa). GTP contacts are provided by residues 165–172, 190–194, 212–215, 282–285, and 310–312; these read GFPSVGKS, FTTLV, DLPG, NKMD, and SAV. Residues Ser-172 and Thr-192 each coordinate Mg(2+). Residues 350-428 form the OCT domain; sequence TMENEEVPFN…LLEFEFEFID (79 aa).

This sequence belongs to the TRAFAC class OBG-HflX-like GTPase superfamily. OBG GTPase family. In terms of assembly, monomer. Interacts with TasA (AC P54507) in pull-down experiments. Mg(2+) is required as a cofactor.

Its subcellular location is the cytoplasm. Inhibited by GDP; less than 20 uM ppGpp stimulates the GTPase, while higher concentrations inhibit. In terms of biological role, necessary for the transition from vegetative growth to stage 0 or stage II of sporulation, but sporulation subsequent to these stages is unaffected at 45 degrees Celsius. This ts effect is probably due solely to the E-79 mutation. Required for expression of early sporulation genes, further suggesting a role in the induction of sporulation. Depletion effects on sporulation can be partially suppressed by missense mutations in spo0A. Strains depleted for obg stop growing after about 3 hours and do not induce the sigma-B factor following ethanol stress. It cofractionates with the ribosome and upstream stress response regulators RsbR, RsbS and RsbT in size fractionation columns, suggesting the ribosome might serve as a possible mediator of the activity of obg and the stress induction of sigma-B. In glycerol gradients partially associates with ribosomes; this is stabilized by a nonhydrolyzable GTP-analog and to a lesser extent GTP and GDP. Its function is as follows. An essential GTPase which binds GTP, GDP and possibly (p)ppGpp with moderate affinity, with high nucleotide exchange rates and a fairly low GTP hydrolysis rate. Plays a role in control of the cell cycle, stress response, ribosome biogenesis and in those bacteria that undergo differentiation, in morphogenesis control. The protein is GTPase Obg of Bacillus subtilis (strain 168).